A 426-amino-acid polypeptide reads, in one-letter code: Serine hydroxymethyltransferase (426 aa).

(6S)-5,6,7,8-tetrahydrofolate-binding positions include L115 and 119 to 121 (GHI). N6-(pyridoxal phosphate)lysine is present on K225.

The protein belongs to the SHMT family. As to quaternary structure, homodimer. Pyridoxal 5'-phosphate serves as cofactor.

The protein resides in the cytoplasm. It functions in the pathway amino-acid biosynthesis; glycine biosynthesis; glycine from L-serine: step 1/1. Its function is as follows. Catalyzes the reversible interconversion of serine and glycine with a modified folate serving as the one-carbon carrier. Also exhibits a pteridine-independent aldolase activity toward beta-hydroxyamino acids, producing glycine and aldehydes, via a retro-aldol mechanism. In Thermoplasma acidophilum (strain ATCC 25905 / DSM 1728 / JCM 9062 / NBRC 15155 / AMRC-C165), this protein is Serine hydroxymethyltransferase.